The chain runs to 96 residues: ATP synthase subunit c (96 aa).

The next 2 membrane-spanning stretches (helical) occupy residues 24–44 and 75–95; these read HVGA…VGVG and AIAE…IFVA.

Belongs to the ATPase C chain family. As to quaternary structure, F-type ATPases have 2 components, F(1) - the catalytic core - and F(0) - the membrane proton channel. F(1) has five subunits: alpha(3), beta(3), gamma(1), delta(1), epsilon(1). F(0) has three main subunits: a(1), b(2) and c(10-14). The alpha and beta chains form an alternating ring which encloses part of the gamma chain. F(1) is attached to F(0) by a central stalk formed by the gamma and epsilon chains, while a peripheral stalk is formed by the delta and b chains.

It localises to the cell membrane. Functionally, f(1)F(0) ATP synthase produces ATP from ADP in the presence of a proton or sodium gradient. F-type ATPases consist of two structural domains, F(1) containing the extramembraneous catalytic core and F(0) containing the membrane proton channel, linked together by a central stalk and a peripheral stalk. During catalysis, ATP synthesis in the catalytic domain of F(1) is coupled via a rotary mechanism of the central stalk subunits to proton translocation. In terms of biological role, key component of the F(0) channel; it plays a direct role in translocation across the membrane. A homomeric c-ring of between 10-14 subunits forms the central stalk rotor element with the F(1) delta and epsilon subunits. This Mycoplasmoides gallisepticum (strain R(low / passage 15 / clone 2)) (Mycoplasma gallisepticum) protein is ATP synthase subunit c.